A 282-amino-acid chain; its full sequence is 4-diphosphocytidyl-2-C-methyl-D-erythritol kinase (282 aa).

The active site involves K12. 95 to 105 contributes to the ATP binding site; it reads PMGGGIGGGSS. D137 is a catalytic residue.

It belongs to the GHMP kinase family. IspE subfamily.

It catalyses the reaction 4-CDP-2-C-methyl-D-erythritol + ATP = 4-CDP-2-C-methyl-D-erythritol 2-phosphate + ADP + H(+). Its pathway is isoprenoid biosynthesis; isopentenyl diphosphate biosynthesis via DXP pathway; isopentenyl diphosphate from 1-deoxy-D-xylulose 5-phosphate: step 3/6. Catalyzes the phosphorylation of the position 2 hydroxy group of 4-diphosphocytidyl-2C-methyl-D-erythritol. The polypeptide is 4-diphosphocytidyl-2-C-methyl-D-erythritol kinase (Pseudomonas aeruginosa (strain LESB58)).